Here is a 553-residue protein sequence, read N- to C-terminus: Probable bifunctional riboflavin biosynthesis protein RIBA 2, chloroplastic (553 aa).

A chloroplast-targeting transit peptide spans methionine 1–alanine 56. The DHBP synthase stretch occupies residues aspartate 62–lysine 336. The tract at residues tyrosine 70–proline 90 is disordered. Over residues glycine 72 to arginine 85 the composition is skewed to polar residues. D-ribulose 5-phosphate contacts are provided by residues arginine 160 to glutamate 161, aspartate 165, arginine 275 to threonine 279, and glutamate 299. Residue glutamate 161 participates in Mg(2+) binding. Histidine 278 provides a ligand contact to Mg(2+). Residues arginine 337–histidine 553 are GTP cyclohydrolase II. Position 387 to 391 (arginine 387 to glutamate 391) interacts with GTP. The Zn(2+) site is built by cysteine 392, cysteine 403, and cysteine 405. GTP-binding positions include glutamine 408, glutamate 431–arginine 433, and threonine 453. Residue aspartate 465 is the Proton acceptor; for GTP cyclohydrolase activity of the active site. The active-site Nucleophile; for GTP cyclohydrolase activity is the arginine 467. 2 residues coordinate GTP: threonine 488 and lysine 493.

It in the N-terminal section; belongs to the DHBP synthase family. This sequence in the C-terminal section; belongs to the GTP cyclohydrolase II family. Requires Mg(2+) as cofactor. The cofactor is Mn(2+). Zn(2+) serves as cofactor.

The protein localises to the plastid. It is found in the chloroplast. It catalyses the reaction D-ribulose 5-phosphate = (2S)-2-hydroxy-3-oxobutyl phosphate + formate + H(+). The catalysed reaction is GTP + 4 H2O = 2,5-diamino-6-hydroxy-4-(5-phosphoribosylamino)-pyrimidine + formate + 2 phosphate + 3 H(+). The protein operates within cofactor biosynthesis; riboflavin biosynthesis; 2-hydroxy-3-oxobutyl phosphate from D-ribulose 5-phosphate: step 1/1. It participates in cofactor biosynthesis; riboflavin biosynthesis; 5-amino-6-(D-ribitylamino)uracil from GTP: step 1/4. Functionally, involved in riboflavin biosynthesis. Catalyzes both the conversion of D-ribulose 5-phosphate to formate and 3,4-dihydroxy-2-butanone 4-phosphate and the conversion of GTP to 2,5-diamino-6-ribosylamino-4(3H)-pyrimidinone 5'-phosphate (DARP), formate and pyrophosphate. The chain is Probable bifunctional riboflavin biosynthesis protein RIBA 2, chloroplastic (RIBA2) from Oryza sativa subsp. japonica (Rice).